Consider the following 180-residue polypeptide: Small ribosomal subunit protein uS4 (180 aa).

Residues 103–174 enclose the S4 RNA-binding domain; that stretch reads RRLQTIVYKK…HPERMMIEKA (72 aa).

The protein belongs to the universal ribosomal protein uS4 family. As to quaternary structure, part of the 30S ribosomal subunit. Contacts protein S5. The interaction surface between S4 and S5 is involved in control of translational fidelity.

One of the primary rRNA binding proteins, it binds directly to 16S rRNA where it nucleates assembly of the body of the 30S subunit. In terms of biological role, with S5 and S12 plays an important role in translational accuracy. The sequence is that of Small ribosomal subunit protein uS4 from Pyrococcus abyssi (strain GE5 / Orsay).